Reading from the N-terminus, the 105-residue chain is Serine protease inhibitor Kazal-type 8 (105 aa).

Positions 1–21 are cleaved as a signal peptide; that stretch reads MKVIFSVAVLVLASSVWTSLA. 3 cysteine pairs are disulfide-bonded: Cys44–Cys78, Cys51–Cys75, and Cys64–Cys96. The Kazal-like domain maps to 44–98; it reads CIKNIQLCWILSYFKVSEPICGSNQVTYEGECHLCSGILYEDRTVIKVHDGPCEH.

In terms of tissue distribution, expressed in epydiymis, in the cauda, corpus and caput.

The protein resides in the secreted. In terms of biological role, probable serine protease inhibitor. This Mus musculus (Mouse) protein is Serine protease inhibitor Kazal-type 8 (Spink8).